The chain runs to 315 residues: Probable cell division protein WhiA (315 aa).

The H-T-H motif DNA-binding region spans 278–312; it reads SLSDLAGMIEGQELTKSGINHRMRKLMQIVKELNH.

This sequence belongs to the WhiA family.

Its function is as follows. Involved in cell division and chromosome segregation. The chain is Probable cell division protein WhiA from Oenococcus oeni (strain ATCC BAA-331 / PSU-1).